The chain runs to 161 residues: Large ribosomal subunit protein eL21 (161 aa).

This sequence belongs to the eukaryotic ribosomal protein eL21 family.

In Cyanophora paradoxa, this protein is Large ribosomal subunit protein eL21 (RPL21).